Consider the following 166-residue polypeptide: ATP synthase subunit b (166 aa).

A helical transmembrane segment spans residues 8-28 (FSFGLFFWQALILVILILLLV).

It belongs to the ATPase B chain family. As to quaternary structure, F-type ATPases have 2 components, F(1) - the catalytic core - and F(0) - the membrane proton channel. F(1) has five subunits: alpha(3), beta(3), gamma(1), delta(1), epsilon(1). F(0) has three main subunits: a(1), b(2) and c(10-14). The alpha and beta chains form an alternating ring which encloses part of the gamma chain. F(1) is attached to F(0) by a central stalk formed by the gamma and epsilon chains, while a peripheral stalk is formed by the delta and b chains.

The protein resides in the cell inner membrane. Its function is as follows. F(1)F(0) ATP synthase produces ATP from ADP in the presence of a proton or sodium gradient. F-type ATPases consist of two structural domains, F(1) containing the extramembraneous catalytic core and F(0) containing the membrane proton channel, linked together by a central stalk and a peripheral stalk. During catalysis, ATP synthesis in the catalytic domain of F(1) is coupled via a rotary mechanism of the central stalk subunits to proton translocation. Component of the F(0) channel, it forms part of the peripheral stalk, linking F(1) to F(0). The chain is ATP synthase subunit b from Flavobacterium johnsoniae (strain ATCC 17061 / DSM 2064 / JCM 8514 / BCRC 14874 / CCUG 350202 / NBRC 14942 / NCIMB 11054 / UW101) (Cytophaga johnsonae).